Consider the following 179-residue polypeptide: Large ribosomal subunit protein uL6 (179 aa).

Belongs to the universal ribosomal protein uL6 family. In terms of assembly, part of the 50S ribosomal subunit.

In terms of biological role, this protein binds to the 23S rRNA, and is important in its secondary structure. It is located near the subunit interface in the base of the L7/L12 stalk, and near the tRNA binding site of the peptidyltransferase center. This chain is Large ribosomal subunit protein uL6, found in Herpetosiphon aurantiacus (strain ATCC 23779 / DSM 785 / 114-95).